The following is a 481-amino-acid chain: (S)-N-methylcoclaurine 3'-hydroxylase isozyme 1 (481 aa).

A heme-binding site is contributed by C423.

Belongs to the cytochrome P450 family. Heme serves as cofactor. Restricted to the parietal region of sieve elements adjacent or proximal to laticifers in roots, stems, leaves, carpels and hypocotyls.

It localises to the endoplasmic reticulum. The enzyme catalyses (S)-N-methylcoclaurine + reduced [NADPH--hemoprotein reductase] + O2 = (S)-3'-hydroxy-N-methylcoclaurine + oxidized [NADPH--hemoprotein reductase] + H2O + H(+). It functions in the pathway alkaloid biosynthesis; (S)-reticuline biosynthesis; (S)-reticuline from (S)-norcoclaurine: step 3/4. Functionally, cytochrome P450 monooxygenase involved in the biosynthesis of benzylisoquinoline alkaloids. Catalyzes the 3'-hydroxylation of (S)-N-methylcoclaurine. The protein is (S)-N-methylcoclaurine 3'-hydroxylase isozyme 1 of Papaver somniferum (Opium poppy).